Reading from the N-terminus, the 129-residue chain is Glycine cleavage system H protein (129 aa).

The Lipoyl-binding domain occupies 23 to 104 (TATIGITQHA…AYAAWLFRLK (82 aa)). An N6-lipoyllysine modification is found at Lys64.

This sequence belongs to the GcvH family. The glycine cleavage system is composed of four proteins: P, T, L and H. It depends on (R)-lipoate as a cofactor.

Its function is as follows. The glycine cleavage system catalyzes the degradation of glycine. The H protein shuttles the methylamine group of glycine from the P protein to the T protein. This is Glycine cleavage system H protein from Nitrosospira multiformis (strain ATCC 25196 / NCIMB 11849 / C 71).